Here is an 89-residue protein sequence, read N- to C-terminus: Small ribosomal subunit protein uS15 (89 aa).

The protein belongs to the universal ribosomal protein uS15 family. As to quaternary structure, part of the 30S ribosomal subunit. Forms a bridge to the 50S subunit in the 70S ribosome, contacting the 23S rRNA.

Its function is as follows. One of the primary rRNA binding proteins, it binds directly to 16S rRNA where it helps nucleate assembly of the platform of the 30S subunit by binding and bridging several RNA helices of the 16S rRNA. Functionally, forms an intersubunit bridge (bridge B4) with the 23S rRNA of the 50S subunit in the ribosome. In Chromobacterium violaceum (strain ATCC 12472 / DSM 30191 / JCM 1249 / CCUG 213 / NBRC 12614 / NCIMB 9131 / NCTC 9757 / MK), this protein is Small ribosomal subunit protein uS15.